Consider the following 300-residue polypeptide: Phosphoribosylaminoimidazole-succinocarboxamide synthase (300 aa).

The protein belongs to the SAICAR synthetase family.

The enzyme catalyses 5-amino-1-(5-phospho-D-ribosyl)imidazole-4-carboxylate + L-aspartate + ATP = (2S)-2-[5-amino-1-(5-phospho-beta-D-ribosyl)imidazole-4-carboxamido]succinate + ADP + phosphate + 2 H(+). It participates in purine metabolism; IMP biosynthesis via de novo pathway; 5-amino-1-(5-phospho-D-ribosyl)imidazole-4-carboxamide from 5-amino-1-(5-phospho-D-ribosyl)imidazole-4-carboxylate: step 1/2. This is Phosphoribosylaminoimidazole-succinocarboxamide synthase from Methylibium petroleiphilum (strain ATCC BAA-1232 / LMG 22953 / PM1).